Consider the following 333-residue polypeptide: MSGDEMIFDPTMSKKKKKKKKPFMLDEEGDAQTEETQPSETKEVEPEPTEDKDVEADEEDSRKKDASDDLDDLNFFNQKKKKKKSKKIFDIDEAEEGIKDLKIESDVQEPAEPEEDLDIMLGNKKKKKKVVKFPDEDEVLEKDEALEDEDSKKDDGISFSNQTGPAWAGSERDYTYEELLNRVFNIMREKNPDMVAGEKRKFVMKPPQVVRVGTKKTSFVNFTDICKLLHRQPKHLLAFLLAELGTSGSIDGNNQLVIKGRFQQKQIENVLRRYIKEYVTCHTCRSPDTILQKDTRLYFLQCETCHSRCSVASIKTGFQAVTGRRAQLRAKAN.

Disordered regions lie at residues 1 to 87, 98 to 117, and 141 to 165; these read MSGD…KSKK, IKDL…EEDL, and EKDE…QTGP. An N-acetylserine modification is found at Ser-2. 2 positions are modified to phosphoserine: Ser-2 and Ser-13. Residues 13-22 show a composition bias toward basic residues; it reads SKKKKKKKKP. The residue at position 36 (Thr-36) is a Phosphothreonine. Residues 40-51 show a composition bias toward basic and acidic residues; the sequence is ETKEVEPEPTED. At Ser-67 the chain carries Phosphoserine. Residue Lys-102 forms a Glycyl lysine isopeptide (Lys-Gly) (interchain with G-Cter in SUMO2) linkage. Ser-105 carries the phosphoserine modification. The segment covering 106–117 has biased composition (acidic residues); it reads DVQEPAEPEEDL. Phosphoserine is present on residues Ser-158 and Ser-218. Lys-265 and Lys-293 each carry N6-acetyllysine. A C4-type zinc finger spans residues 281 to 305; that stretch reads CHTCRSPDTILQKDTRLYFLQCETC.

Belongs to the eIF-2-beta/eIF-5 family. Eukaryotic translation initiation factor 2 eIF2 is a heterotrimeric complex composed of an alpha (EIF2S1), a beta (EIF2S2) and a gamma (EIF2S3) chain. eIF2 is member of the 43S pre-initiation complex (43S PIC). eIF2 forms a complex with at least CELF1/CUGBP1, CALR, CALR3, EIF2S1, EIF2S2, HSP90B1 and HSPA5. Interacts with BZW2/5MP1. Interacts with EIF5.

The protein localises to the cytoplasm. Its subcellular location is the cytosol. Component of the eIF2 complex that functions in the early steps of protein synthesis by forming a ternary complex with GTP and initiator tRNA. This complex binds to a 40S ribosomal subunit, followed by mRNA binding to form a 43S pre-initiation complex (43S PIC). Junction of the 60S ribosomal subunit to form the 80S initiation complex is preceded by hydrolysis of the GTP bound to eIF2 and release of an eIF2-GDP binary complex. In order for eIF2 to recycle and catalyze another round of initiation, the GDP bound to eIF2 must exchange with GTP by way of a reaction catalyzed by eIF2B. The chain is Eukaryotic translation initiation factor 2 subunit 2 (EIF2S2) from Bos taurus (Bovine).